We begin with the raw amino-acid sequence, 434 residues long: ATP-sensitive inward rectifier potassium channel 14 (434 aa).

The Cytoplasmic portion of the chain corresponds to M1–D81. Residue C79 is modified to S-nitrosocysteine. Residues V82–L108 form a helical membrane-spanning segment. Residues I109–S131 lie on the Extracellular side of the membrane. Residues F132–Y148 constitute an intramembrane region (helical; Pore-forming). The Selectivity filter motif lies at S145–V150. Over G149–C157 the chain is Extracellular. The chain crosses the membrane as a helical span at residues P158 to K185. At M186–P434 the chain is on the cytoplasmic side. The interval Q398 to P434 is disordered. Residues K407–D416 show a composition bias toward basic and acidic residues. Residues A418–P434 show a composition bias toward low complexity.

It belongs to the inward rectifier-type potassium channel (TC 1.A.2.1) family. KCNJ14 subfamily. In terms of tissue distribution, expressed predominantly in motoneurons of cranial nerve motor nuclei within the general somatic and special visceral motor cell column.

Its subcellular location is the membrane. The catalysed reaction is K(+)(in) = K(+)(out). Its activity is regulated as follows. Channel activity is regulated by variations of cytosolic pH; channels are activated by alkaline and inhibited by acidic pH values. Inhibited by Ba(2+) and Cs(+) in a voltage-dependent manner; sensitivity to those inhibitors is lower than in other Kir channels. Its function is as follows. Inward rectifier potassium channels are characterized by a greater tendency to allow potassium to flow into the cell rather than out of it. Their voltage dependence is regulated by the concentration of extracellular potassium; as external potassium is raised, the voltage range of the channel opening shifts to more positive voltages. This is ATP-sensitive inward rectifier potassium channel 14 (Kcnj14) from Rattus norvegicus (Rat).